Here is a 206-residue protein sequence, read N- to C-terminus: Isochorismatase domain-containing protein 2A (206 aa).

Lysine 26 is subject to N6-succinyllysine. An N6-acetyllysine; alternate mark is found at lysine 93 and lysine 178. N6-succinyllysine; alternate occurs at positions 93 and 178. Lysine 182 and lysine 185 each carry N6-acetyllysine.

It belongs to the isochorismatase family. As to quaternary structure, interacts with CDKN2A. Ubiquitous. Expressed predominantly in uterus, stomach and urinary tract.

The protein localises to the cytoplasm. It is found in the nucleus. The sequence is that of Isochorismatase domain-containing protein 2A from Mus musculus (Mouse).